Here is a 251-residue protein sequence, read N- to C-terminus: MIKWPWKAQEITQNADWLWDDALAIPLLVNLTAQEQARLIALAERFLQQKRLVALQGVELDSLKSARIALIFCLPILELGLEWLDGFHEVLIYPAPFVVDDEWEDDIGLVHSQRVVQSGQSWQQGPIILNWLDIQDSFDASGFNLIIHEVAHKLDMRNGDRASGIPFIPLRDVAGWEHDLHAAMNNIQDEIDLVGENAASIDAYAATDPAECFAVLSEYFFSAPELFAPRFPALWQRFCQFYRQDPSQRLR.

Zn(2+)-binding residues include H111, H148, H152, and E211.

Belongs to the MtfA family. Interacts with Mlc. Zn(2+) is required as a cofactor.

The protein resides in the cytoplasm. Involved in the modulation of the activity of the glucose-phosphotransferase system (glucose-PTS). Interacts with the transcriptional repressor Mlc, preventing its interaction with DNA and leading to the modulation of expression of genes regulated by Mlc, including ptsG, which encodes the PTS system glucose-specific EIICB component. Its function is as follows. Shows zinc-dependent metallopeptidase activity. The sequence is that of Mlc titration factor A from Salmonella arizonae (strain ATCC BAA-731 / CDC346-86 / RSK2980).